The chain runs to 481 residues: Tryptophan--tRNA ligase, cytoplasmic (481 aa).

Residues 12–68 (SPLELFNSIAAQGELVRSLKAGNAPKDEIESAVKMLLSLKMNYKTAMGEEYKAGCPP) form the WHEP-TRS domain. The interval 65-85 (GCPPGNSTAGSNGDPDATKAS) is disordered. An N6-succinyllysine modification is found at Lys-158. The short motif at 168–177 (PSSEAMHLGH) is the 'HIGH' region element. The short motif at 353 to 357 (KMSAS) is the 'KMSKS' region element. A Phosphoserine modification is found at Ser-355.

The protein belongs to the class-I aminoacyl-tRNA synthetase family. As to quaternary structure, homodimer. Interacts with oxidized form of GAPDH. Proteolytic cleavage generates 2 forms; T1-TrpRS and T2-TrpRS.

It localises to the cytoplasm. It carries out the reaction tRNA(Trp) + L-tryptophan + ATP = L-tryptophyl-tRNA(Trp) + AMP + diphosphate + H(+). Catalyzes the attachment of tryptophan to tRNA(Trp) in a two-step reaction: tryptophan is first activated by ATP to form Trp-AMP and then transferred to the acceptor end of the tRNA(Trp). Could also possess an angiostatic activity. In Rattus norvegicus (Rat), this protein is Tryptophan--tRNA ligase, cytoplasmic.